Reading from the N-terminus, the 331-residue chain is Glyceraldehyde-3-phosphate dehydrogenase, cytosolic (331 aa).

NAD(+)-binding positions include 11–12, Asp-33, and Arg-77; that span reads RI. Residues 148-150, Thr-179, 208-209, and Arg-231 contribute to the D-glyceraldehyde 3-phosphate site; these read SCT and TG. Cys-149 functions as the Nucleophile in the catalytic mechanism. NAD(+) is bound at residue Asn-313.

This sequence belongs to the glyceraldehyde-3-phosphate dehydrogenase family. Homotetramer.

It localises to the cytoplasm. It catalyses the reaction D-glyceraldehyde 3-phosphate + phosphate + NAD(+) = (2R)-3-phospho-glyceroyl phosphate + NADH + H(+). It functions in the pathway carbohydrate degradation; glycolysis; pyruvate from D-glyceraldehyde 3-phosphate: step 1/5. This chain is Glyceraldehyde-3-phosphate dehydrogenase, cytosolic (GAPC), found in Leishmania mexicana.